We begin with the raw amino-acid sequence, 346 residues long: Nicotinate-nucleotide--dimethylbenzimidazole phosphoribosyltransferase (346 aa).

E312 serves as the catalytic Proton acceptor.

It belongs to the CobT family.

It carries out the reaction 5,6-dimethylbenzimidazole + nicotinate beta-D-ribonucleotide = alpha-ribazole 5'-phosphate + nicotinate + H(+). The protein operates within nucleoside biosynthesis; alpha-ribazole biosynthesis; alpha-ribazole from 5,6-dimethylbenzimidazole: step 1/2. Functionally, catalyzes the synthesis of alpha-ribazole-5'-phosphate from nicotinate mononucleotide (NAMN) and 5,6-dimethylbenzimidazole (DMB). This is Nicotinate-nucleotide--dimethylbenzimidazole phosphoribosyltransferase from Cupriavidus taiwanensis (strain DSM 17343 / BCRC 17206 / CCUG 44338 / CIP 107171 / LMG 19424 / R1) (Ralstonia taiwanensis (strain LMG 19424)).